We begin with the raw amino-acid sequence, 85 residues long: Small ribosomal subunit protein uS15 (85 aa).

This sequence belongs to the universal ribosomal protein uS15 family. Part of the 30S ribosomal subunit. Forms a bridge to the 50S subunit in the 70S ribosome, contacting the 23S rRNA.

One of the primary rRNA binding proteins, it binds directly to 16S rRNA where it helps nucleate assembly of the platform of the 30S subunit by binding and bridging several RNA helices of the 16S rRNA. Functionally, forms an intersubunit bridge (bridge B4) with the 23S rRNA of the 50S subunit in the ribosome. In Fusobacterium nucleatum subsp. nucleatum (strain ATCC 25586 / DSM 15643 / BCRC 10681 / CIP 101130 / JCM 8532 / KCTC 2640 / LMG 13131 / VPI 4355), this protein is Small ribosomal subunit protein uS15.